The following is a 226-amino-acid chain: Ribonuclease HII (226 aa).

Residues 29–220 (GPVAGVDEAG…VAALLHRVDN (192 aa)) enclose the RNase H type-2 domain. A divalent metal cation-binding residues include Asp35, Glu36, and Asp129.

It belongs to the RNase HII family. Mn(2+) serves as cofactor. Requires Mg(2+) as cofactor.

It is found in the cytoplasm. It catalyses the reaction Endonucleolytic cleavage to 5'-phosphomonoester.. Its function is as follows. Endonuclease that specifically degrades the RNA of RNA-DNA hybrids. This chain is Ribonuclease HII, found in Rhodococcus opacus (strain B4).